Here is a 299-residue protein sequence, read N- to C-terminus: GTPase Era (299 aa).

In terms of domain architecture, Era-type G spans 4 to 171 (KSGFVAILGR…VDILSENLDE (168 aa)). A G1 region spans residues 12–19 (GRPNVGKS). 12–19 (GRPNVGKS) provides a ligand contact to GTP. The tract at residues 38 to 42 (QTTRN) is G2. Residues 59–62 (DTPG) are G3. Residues 59 to 63 (DTPGI) and 121 to 124 (NKID) each bind GTP. The G4 stretch occupies residues 121–124 (NKID). The G5 stretch occupies residues 150–152 (ISA). Positions 202–280 (TREEIPHSVA…FLETWVKVKK (79 aa)) constitute a KH type-2 domain.

This sequence belongs to the TRAFAC class TrmE-Era-EngA-EngB-Septin-like GTPase superfamily. Era GTPase family. As to quaternary structure, monomer.

Its subcellular location is the cytoplasm. It is found in the cell membrane. An essential GTPase that binds both GDP and GTP, with rapid nucleotide exchange. Plays a role in 16S rRNA processing and 30S ribosomal subunit biogenesis and possibly also in cell cycle regulation and energy metabolism. The polypeptide is GTPase Era (Streptococcus pneumoniae (strain Hungary19A-6)).